We begin with the raw amino-acid sequence, 97 residues long: Co-chaperonin GroES (97 aa).

Belongs to the GroES chaperonin family. Heptamer of 7 subunits arranged in a ring. Interacts with the chaperonin GroEL.

It is found in the cytoplasm. In terms of biological role, together with the chaperonin GroEL, plays an essential role in assisting protein folding. The GroEL-GroES system forms a nano-cage that allows encapsulation of the non-native substrate proteins and provides a physical environment optimized to promote and accelerate protein folding. GroES binds to the apical surface of the GroEL ring, thereby capping the opening of the GroEL channel. This chain is Co-chaperonin GroES, found in Pseudomonas aeruginosa (strain LESB58).